A 253-amino-acid chain; its full sequence is Aminoglycoside nucleotidyltransferase (4') (253 aa).

In terms of assembly, homodimer.

The catalysed reaction is kanamycin A + ATP = 4'-adenylylkanamycin A + diphosphate. The enzyme catalyses amikacin + ATP = 4'-adenylylamikacin + diphosphate. It catalyses the reaction neomycin B + ATP = 4'-adenylylneomycin B + diphosphate. It carries out the reaction paromomycin + ATP = 4'-adenylylparomomycin + diphosphate. The catalysed reaction is ribostamycin + ATP = 4'-adenylylribostamycin + diphosphate. The enzyme catalyses tobramycin + ATP = 4'-adenylyltobramycin + diphosphate. It catalyses the reaction kanamycin A + CTP = 4'-cytidylylkanamycin A + diphosphate. It carries out the reaction kanamycin A + GTP = 4'-guanylylkanamycin A + diphosphate. The catalysed reaction is kanamycin A + ITP = 4'-inosinylylkanamycin A + diphosphate. The enzyme catalyses dTTP + kanamycin A = 4'-thymidylylkanamycin A + diphosphate. It catalyses the reaction kanamycin A + UTP = 4'-uridylylkanamycin A + diphosphate. It carries out the reaction kanamycin A + dATP = 4'-(2'-deoxyadenylyl)kanamycin A + diphosphate. The catalysed reaction is kanamycin A + dCTP = 4'-(2'-deoxycytidylyl)kanamycin A + diphosphate. The enzyme catalyses kanamycin A + dGTP = 4'-(2'-deoxyguanylyl)kanamycin A + diphosphate. It catalyses the reaction dUTP + kanamycin A = 4'-(2'-deoxyuridylyl)kanamycin A + diphosphate. It carries out the reaction amikacin + GTP = 4'-guanylylamikacin + diphosphate. The catalysed reaction is amikacin + ITP = 4'-inosinylylamikacin + diphosphate. The enzyme catalyses amikacin + CTP = 4'-cytidylylamikacin + diphosphate. It catalyses the reaction amikacin + UTP = 4'-uridylylamikacin + diphosphate. It carries out the reaction amikacin + dTTP = 4'-thymidylylamikacin + diphosphate. Inactivates aminoglycoside antibiotics such as kanamycin by catalyzing the transfer of a nucleotidyl group from nucleoside triphosphates such as (d)ATP to the 4'-hydroxyl group of the aminoglycoside. This is Aminoglycoside nucleotidyltransferase (4') from Bacillus sp.